Consider the following 517-residue polypeptide: GMP synthase [glutamine-hydrolyzing] (517 aa).

Residues 11–202 (KIIVLDYGSQ…AFDICKAEAN (192 aa)) form the Glutamine amidotransferase type-1 domain. The active-site Nucleophile is the C88. Catalysis depends on residues H176 and E178. One can recognise a GMPS ATP-PPase domain in the interval 203 to 392 (WSMDDFITKQ…LGMPHALVWR (190 aa)). 230 to 236 (SGGVDSS) contacts ATP.

In terms of assembly, homodimer.

The enzyme catalyses XMP + L-glutamine + ATP + H2O = GMP + L-glutamate + AMP + diphosphate + 2 H(+). It functions in the pathway purine metabolism; GMP biosynthesis; GMP from XMP (L-Gln route): step 1/1. Functionally, catalyzes the synthesis of GMP from XMP. In Lacticaseibacillus casei (strain BL23) (Lactobacillus casei), this protein is GMP synthase [glutamine-hydrolyzing].